Consider the following 293-residue polypeptide: ATP synthase gamma chain (293 aa).

The protein belongs to the ATPase gamma chain family. In terms of assembly, F-type ATPases have 2 components, CF(1) - the catalytic core - and CF(0) - the membrane proton channel. CF(1) has five subunits: alpha(3), beta(3), gamma(1), delta(1), epsilon(1). CF(0) has three main subunits: a, b and c.

Its subcellular location is the cell membrane. Functionally, produces ATP from ADP in the presence of a proton gradient across the membrane. The gamma chain is believed to be important in regulating ATPase activity and the flow of protons through the CF(0) complex. This is ATP synthase gamma chain from Methylacidiphilum infernorum (isolate V4) (Methylokorus infernorum (strain V4)).